Consider the following 859-residue polypeptide: Linoleate 9S-lipoxygenase 1 (859 aa).

A PLAT domain is found at 21–161 (VKGTVVLMKK…HYTTDRVFFS (141 aa)). The 696-residue stretch at 164–859 (TYLPHETPAT…GRGIPNSVSI (696 aa)) folds into the Lipoxygenase domain. Residues 213-246 (KNPRPVLGGTQEYPYPRRGRTGRKPTKEDPQTES) form a disordered region. Fe cation-binding residues include histidine 519, histidine 524, histidine 711, asparagine 715, and isoleucine 859.

It belongs to the lipoxygenase family. As to quaternary structure, monomer. Fe cation is required as a cofactor. Seedlings, roots, leaves, and flowers (at protein level). Expressed in guard cells.

The protein resides in the cytoplasm. The catalysed reaction is (9Z,12Z)-octadecadienoate + O2 = (9S)-hydroperoxy-(10E,12Z)-octadecadienoate. It catalyses the reaction (9Z,12Z,15Z)-octadecatrienoate + O2 = (9S)-hydroperoxy-(10E,12Z,15Z)-octadecatrienoate. Its pathway is lipid metabolism; oxylipin biosynthesis. Its function is as follows. 9S-lipoxygenase that can use linoleic acid or linolenic acid as substrates. Plant lipoxygenases may be involved in a number of diverse aspects of plant physiology including growth and development, pest resistance, and senescence or responses to wounding. Catalyzes the hydroperoxidation of lipids containing a cis,cis-1,4-pentadiene structure. Function as regulators of root development by controlling the emergence of lateral roots. 9S-lypoxygenase-derived oxylipins may play an antagonistic role to ethylene signaling in the control of responses involving oxidative stress, lipid peroxidation and plant defense. LOX1-derived oxylipins may be involved in stress signaling from roots to shoots in response to cadmium exposure. 9S-lypoxygenase-derived oxylipins are engaged during infection to control the balance between salicylic acid (SA) and jasmonate (JA) signaling to facilitate infection by the fungal pathogen Fusarium graminearum. 9S-lypoxygenase-derived oxylipins activate brassinosteroid signaling to promote cell wall-based defense and limit pathogen infection. The LOX1-derived compound (9S)-hydroperoxy-(10E,12Z,15Z)-octadecatrienoate protects plant tissues against infection by the bacterial pathogen Pseudomonas syringae pv tomato DC3000. The LOX1-derived oxylipins are required to trigger stomatal closure in response to both infection by the bacterial pathogen Pseudomonas syringae pv tomato DC3000, and the pathogen-associated molecular pattern (PAMP) flagellin peptide flg22. Contributes to the oxidation of free fatty acids during seed aging. This is Linoleate 9S-lipoxygenase 1 from Arabidopsis thaliana (Mouse-ear cress).